Reading from the N-terminus, the 295-residue chain is Ribosomal protein L11 methyltransferase (295 aa).

S-adenosyl-L-methionine contacts are provided by Thr138, Gly161, Asp183, and Asn230.

It belongs to the methyltransferase superfamily. PrmA family.

The protein localises to the cytoplasm. The catalysed reaction is L-lysyl-[protein] + 3 S-adenosyl-L-methionine = N(6),N(6),N(6)-trimethyl-L-lysyl-[protein] + 3 S-adenosyl-L-homocysteine + 3 H(+). Its function is as follows. Methylates ribosomal protein L11. The protein is Ribosomal protein L11 methyltransferase of Bradyrhizobium diazoefficiens (strain JCM 10833 / BCRC 13528 / IAM 13628 / NBRC 14792 / USDA 110).